Here is a 132-residue protein sequence, read N- to C-terminus: Small ribosomal subunit protein uS8 (132 aa).

The protein belongs to the universal ribosomal protein uS8 family. In terms of assembly, part of the 30S ribosomal subunit. Contacts proteins S5 and S12.

Its function is as follows. One of the primary rRNA binding proteins, it binds directly to 16S rRNA central domain where it helps coordinate assembly of the platform of the 30S subunit. In Lactococcus lactis subsp. cremoris (strain MG1363), this protein is Small ribosomal subunit protein uS8.